Reading from the N-terminus, the 78-residue chain is Acyl carrier protein (78 aa).

Residues 2–77 enclose the Carrier domain; that stretch reads SDIAERVKKI…DAVKFIEKAQ (76 aa). Residue Ser-37 is modified to O-(pantetheine 4'-phosphoryl)serine.

The protein belongs to the acyl carrier protein (ACP) family. 4'-phosphopantetheine is transferred from CoA to a specific serine of apo-ACP by AcpS. This modification is essential for activity because fatty acids are bound in thioester linkage to the sulfhydryl of the prosthetic group.

It is found in the cytoplasm. Its pathway is lipid metabolism; fatty acid biosynthesis. In terms of biological role, carrier of the growing fatty acid chain in fatty acid biosynthesis. This chain is Acyl carrier protein, found in Rhizobium etli (strain CIAT 652).